Reading from the N-terminus, the 510-residue chain is Chromosomal replication initiator protein DnaA (510 aa).

The segment at 1-74 (MHTDLWERGC…EATLSELAGK (74 aa)) is domain I, interacts with DnaA modulators. Residues 74–173 (KPVRLELSLL…PTLSPAVSRG (100 aa)) are domain II. Residues 125 to 168 (ARHDPQSVVPTPGGSANGRAAPRVGEPGGPVGTSTLPVAPTLSP) are disordered. The segment at 174 to 390 (RLNPALTFDT…GALRKVLAYS (217 aa)) is domain III, AAA+ region. The ATP site is built by Gly218, Gly220, Lys221, and Thr222. Positions 391 to 510 (RFSHKEISIN…LHVLEQTLKG (120 aa)) are domain IV, binds dsDNA.

This sequence belongs to the DnaA family. In terms of assembly, oligomerizes as a right-handed, spiral filament on DNA at oriC.

It localises to the cytoplasm. Functionally, plays an essential role in the initiation and regulation of chromosomal replication. ATP-DnaA binds to the origin of replication (oriC) to initiate formation of the DNA replication initiation complex once per cell cycle. Binds the DnaA box (a 9 base pair repeat at the origin) and separates the double-stranded (ds)DNA. Forms a right-handed helical filament on oriC DNA; dsDNA binds to the exterior of the filament while single-stranded (ss)DNA is stabiized in the filament's interior. The ATP-DnaA-oriC complex binds and stabilizes one strand of the AT-rich DNA unwinding element (DUE), permitting loading of DNA polymerase. After initiation quickly degrades to an ADP-DnaA complex that is not apt for DNA replication. Binds acidic phospholipids. The sequence is that of Chromosomal replication initiator protein DnaA from Leptothrix cholodnii (strain ATCC 51168 / LMG 8142 / SP-6) (Leptothrix discophora (strain SP-6)).